A 208-amino-acid polypeptide reads, in one-letter code: Histone H1t (208 aa).

The span at 1–12 (MSETAPAASSTL) shows a compositional bias: polar residues. Residues 1 to 39 (MSETAPAASSTLVPAPVEKPATKRRGKKPGMATARKPRG) are disordered. Serine 9 carries the post-translational modification Phosphoserine. The H15 domain occupies 38–111 (RGFSVSKLIP…GASGSFKLSK (74 aa)). Arginine 56 bears the Citrulline mark. Positions 93–208 (GVLVQTKGTG…TDLRKAAGRK (116 aa)) are disordered. Residues 121-134 (KGKKSASAKAKKLG) show a composition bias toward basic residues. Position 141 is a phosphoserine (serine 141). Residues 143–154 (KSSKTKVVKKPK) are compositionally biased toward basic residues. At threonine 156 the chain carries Phosphothreonine. Serine 163, serine 178, and serine 187 each carry phosphoserine. Positions 199–208 (TDLRKAAGRK) are enriched in basic and acidic residues.

This sequence belongs to the histone H1/H5 family. In terms of processing, phosphorylated in early spermatids. Post-translationally, citrullination at Arg-56 (H1R54ci) by PADI4 takes place within the DNA-binding site of H1 and results in its displacement from chromatin and global chromatin decondensation, thereby promoting pluripotency and stem cell maintenance. In terms of tissue distribution, testis-specific. Expressed in pachytene spermatocytes during meiotic prophase I.

The protein resides in the nucleus. It is found in the chromosome. In terms of biological role, testis-specific histone H1 that forms less compacted chromatin compared to other H1 histone subtypes. Formation of more relaxed chromatin may be required to promote chromatin architecture required for proper chromosome regulation during meiosis, such as homologous recombination. Histones H1 act as linkers that bind to nucleosomes and compact polynucleosomes into a higher-order chromatin configuration. In Rattus norvegicus (Rat), this protein is Histone H1t.